A 197-amino-acid chain; its full sequence is Cell division protein SepF (197 aa).

A disordered region spans residues 15–89 (EEEEVEGPEE…RMNNNSKNNS (75 aa)). Basic and acidic residues predominate over residues 22–42 (PEERESSRSRERVQEREDYNR). Residues 43–73 (NENQATPQTFNNKQQAIKSVPQKNTLRSNTT) show a composition bias toward polar residues. Over residues 80-89 (RMNNNSKNNS) the composition is skewed to low complexity.

This sequence belongs to the SepF family. Homodimer. Interacts with FtsZ.

Its subcellular location is the cytoplasm. Functionally, cell division protein that is part of the divisome complex and is recruited early to the Z-ring. Probably stimulates Z-ring formation, perhaps through the cross-linking of FtsZ protofilaments. Its function overlaps with FtsA. The protein is Cell division protein SepF of Staphylococcus epidermidis (strain ATCC 35984 / DSM 28319 / BCRC 17069 / CCUG 31568 / BM 3577 / RP62A).